A 359-amino-acid polypeptide reads, in one-letter code: Peptide chain release factor 1 (359 aa).

Position 235 is an N5-methylglutamine (glutamine 235).

Belongs to the prokaryotic/mitochondrial release factor family. Post-translationally, methylated by PrmC. Methylation increases the termination efficiency of RF1.

The protein resides in the cytoplasm. Functionally, peptide chain release factor 1 directs the termination of translation in response to the peptide chain termination codons UAG and UAA. The polypeptide is Peptide chain release factor 1 (Ehrlichia ruminantium (strain Gardel)).